A 262-amino-acid polypeptide reads, in one-letter code: Methionine-rich nacre protein (262 aa).

The signal sequence occupies residues 1–22 (MSIMRRILCLAVVIFIINDVSS). Residues 26-35 (GNNKNWKKNG) show a composition bias toward low complexity. Residues 26 to 84 (GNNKNWKKNGMSLSSPGNKKPTGNNAVPQKSKMNNMNQNSLSQPKRSSPPGNSMYNMAN) are disordered. Over residues 36 to 84 (MSLSSPGNKKPTGNNAVPQKSKMNNMNQNSLSQPKRSSPPGNSMYNMAN) the composition is skewed to polar residues.

As to expression, expressed in mantle and, after secretion, incorporated into acid-insoluble nacre matrix of the shell (at protein level). Expressed primarily in the mantle with highest level in the mantle pallium and lower level in the mantle edge.

The protein localises to the secreted. The protein is Methionine-rich nacre protein of Pinctada maxima (Silver-lipped pearl oyster).